A 619-amino-acid polypeptide reads, in one-letter code: Type VI secretion system component TssF1 (619 aa).

In terms of assembly, interacts with TssA1.

In terms of biological role, core component of the H1 type VI (H1-T6SS) secretion system that plays a role in the release of toxins targeting both eukaryotic and prokaryotic species. In Pseudomonas aeruginosa (strain ATCC 15692 / DSM 22644 / CIP 104116 / JCM 14847 / LMG 12228 / 1C / PRS 101 / PAO1), this protein is Type VI secretion system component TssF1.